A 590-amino-acid polypeptide reads, in one-letter code: G protein-coupled receptor kinase 5 (590 aa).

Positions 1 to 185 are N-terminal; that stretch reads MELENIVANT…LERQPVTKNT (185 aa). The tract at residues 20-39 is interaction with calmodulin; the sequence is GGKRKGKSKKWKEILKFPHI. Residues 53–171 enclose the RGS domain; sequence YCSLCDKQPV…LDSMYFDRFL (119 aa). Residues 186 to 448 form the Protein kinase domain; sequence FRQYRVLGKG…AAEVKRHPFF (263 aa). Residues 192-200 and Lys-215 each bind ATP; that span reads LGKGGFGEV. Asp-311 functions as the Proton acceptor in the catalytic mechanism. Residues 388 to 395 carry the Nuclear localization signal motif; that stretch reads RKEKVKRE. In terms of domain architecture, AGC-kinase C-terminal spans 449–514; sequence RNMNFKRLEA…GSVPIPWQSE (66 aa). At Ser-484 the chain carries Phosphoserine; by autocatalysis. Thr-485 bears the Phosphothreonine; by autocatalysis mark. Residues 546-565 form a sufficient for membrane localization region; it reads PKKGLLQRLFKRQHQNNSKS. Positions 554–590 are disordered; the sequence is LFKRQHQNNSKSSPNSKTSFNHHINSNHVSSNSTGSS. Residues 561-590 show a composition bias toward low complexity; the sequence is NNSKSSPNSKTSFNHHINSNHVSSNSTGSS. The residue at position 579 (Ser-579) is a Phosphoserine.

This sequence belongs to the protein kinase superfamily. AGC Ser/Thr protein kinase family. GPRK subfamily. As to quaternary structure, interacts with ST13 (via the C-terminus 303-319 AA). Interacts with TP53/p53. Interacts with HTR4 (via C-terminus 330-346 AA); this interaction is promoted by 5-HT (serotonin). Interacts with HDAC5. Interacts with GIT1. Post-translationally, autophosphorylated. Autophosphorylation may play a critical role in the regulation of GRK5 kinase activity. As to expression, highest levels in lung, heart, retina, lingual epithelium. Very little in brain, liver, kidney.

The protein localises to the cytoplasm. The protein resides in the nucleus. It localises to the cell membrane. It catalyses the reaction [G-protein-coupled receptor] + ATP = [G-protein-coupled receptor]-phosphate + ADP + H(+). Its activity is regulated as follows. Inhibited by calmodulin with an IC(50) of 50 nM. Calmodulin inhibits GRK5 association with receptor and phospholipid. In terms of biological role, serine/threonine kinase that phosphorylates preferentially the activated forms of a variety of G-protein-coupled receptors (GPCRs). Such receptor phosphorylation initiates beta-arrestin-mediated receptor desensitization, internalization, and signaling events leading to their down-regulation. Phosphorylates a variety of GPCRs, including adrenergic receptors (Beta-2 adrenergic receptor), muscarinic acetylcholine receptors (more specifically Gi-coupled M2/M4 subtypes), dopamine receptors and opioid receptors. In addition to GPCRs, also phosphorylates various substrates: Hsc70-interacting protein/ST13, TP53/p53, HDAC5, and arrestin-1/ARRB1. Phosphorylation of ARRB1 by GRK5 inhibits G-protein independent MAPK1/MAPK3 signaling downstream of 5HT4-receptors. Phosphorylation of HDAC5, a repressor of myocyte enhancer factor 2 (MEF2) leading to nuclear export of HDAC5 and allowing MEF2-mediated transcription. Phosphorylation of TP53/p53, a crucial tumor suppressor, inhibits TP53/p53-mediated apoptosis. Phosphorylation of ST13 regulates internalization of the chemokine receptor. Phosphorylates rhodopsin (RHO) (in vitro) and a non G-protein-coupled receptor, LRP6 during Wnt signaling (in vitro). This chain is G protein-coupled receptor kinase 5 (GRK5), found in Bos taurus (Bovine).